A 326-amino-acid polypeptide reads, in one-letter code: 5,10-methylenetetrahydromethanopterin reductase (326 aa).

The protein belongs to the mer family.

The protein resides in the cytoplasm. It carries out the reaction 5-methyl-5,6,7,8-tetrahydromethanopterin + oxidized coenzyme F420-(gamma-L-Glu)(n) + H(+) = 5,10-methylenetetrahydromethanopterin + reduced coenzyme F420-(gamma-L-Glu)(n). The protein operates within one-carbon metabolism; methanogenesis from CO(2); methyl-coenzyme M from 5,10-methylene-5,6,7,8-tetrahydromethanopterin: step 1/2. Catalyzes the reversible reduction of methylene-H(4)MPT to methyl-H(4)MPT. This is 5,10-methylenetetrahydromethanopterin reductase from Methanolobus tindarius.